The sequence spans 297 residues: UPF0761 membrane protein VC0395_A2314/VC395_2854 (297 aa).

6 helical membrane passes run 43–63 (LLSMVPMLTVLLSILSSFALF), 100–120 (MTAVGGAFLFVAAIMLISNID), 135–155 (AVFSFSMYWMILTLGPILVGA), 181–201 (FLRWLPFVLSYCAFVGLYLLV), 213–233 (LGALIAAILFELSKKGFAAYI), and 245–265 (ALAAIPILFVWVYLCWLIVLV).

It belongs to the UPF0761 family.

Its subcellular location is the cell inner membrane. The polypeptide is UPF0761 membrane protein VC0395_A2314/VC395_2854 (Vibrio cholerae serotype O1 (strain ATCC 39541 / Classical Ogawa 395 / O395)).